The chain runs to 576 residues: Chaperonin CPN60-2, mitochondrial (576 aa).

The N-terminal 34 residues, 1–34 (MYRAAASLASKARQAGSSSAARQVGSRLAWSRNY), are a transit peptide targeting the mitochondrion.

The protein belongs to the chaperonin (HSP60) family.

The protein localises to the mitochondrion. In terms of biological role, implicated in mitochondrial protein import and macromolecular assembly. May facilitate the correct folding of imported proteins. May also prevent misfolding and promote the refolding and proper assembly of unfolded polypeptides generated under stress conditions in the mitochondrial matrix. In Zea mays (Maize), this protein is Chaperonin CPN60-2, mitochondrial (CPN60II).